Consider the following 200-residue polypeptide: 3-isopropylmalate dehydratase small subunit 2 (200 aa).

The protein belongs to the LeuD family. LeuD type 1 subfamily. As to quaternary structure, heterodimer of LeuC and LeuD.

It catalyses the reaction (2R,3S)-3-isopropylmalate = (2S)-2-isopropylmalate. The protein operates within amino-acid biosynthesis; L-leucine biosynthesis; L-leucine from 3-methyl-2-oxobutanoate: step 2/4. Its function is as follows. Catalyzes the isomerization between 2-isopropylmalate and 3-isopropylmalate, via the formation of 2-isopropylmaleate. This chain is 3-isopropylmalate dehydratase small subunit 2, found in Mannheimia succiniciproducens (strain KCTC 0769BP / MBEL55E).